The chain runs to 335 residues: Rho guanine nucleotide exchange factor 39 (335 aa).

Residues Lys22–Ile197 form the DH domain. The PH domain maps to Trp227–Ser331.

As to expression, strongly expressed in hepatocellular carcinoma (HCC) compared with their non-cancerous counterparts.

It is found in the cell membrane. Its function is as follows. Promotes cell proliferation. The protein is Rho guanine nucleotide exchange factor 39 (ARHGEF39) of Homo sapiens (Human).